A 316-amino-acid chain; its full sequence is Cell division protein FtsQ (316 aa).

Residues 1–34 form a disordered region; the sequence is MAKAARRTKSAPARRSPRRHARQTGATIRRPKRP. The Cytoplasmic portion of the chain corresponds to 1 to 61; sequence MAKAARRTKS…HPLLKQMAKR (61 aa). The helical transmembrane segment at 62–80 threads the bilayer; the sequence is LLLILVIVGFLAGLWAARW. Residues 81-316 are Periplasmic-facing; it reads PQLLATKTGE…AADPLVSDRI (236 aa). A POTRA domain is found at 97-165; sequence FSVRHVEIVG…DTLVVDIVER (69 aa). Residues 295–316 form a disordered region; sequence PEPVKKATKPAKAADPLVSDRI.

Belongs to the FtsQ/DivIB family. FtsQ subfamily.

It is found in the cell inner membrane. In terms of biological role, essential cell division protein. The sequence is that of Cell division protein FtsQ from Zymomonas mobilis subsp. mobilis (strain ATCC 31821 / ZM4 / CP4).